We begin with the raw amino-acid sequence, 115 residues long: UPF0122 protein NT01CX_2214 (115 aa).

The protein belongs to the UPF0122 family.

Might take part in the signal recognition particle (SRP) pathway. This is inferred from the conservation of its genetic proximity to ftsY/ffh. May be a regulatory protein. This chain is UPF0122 protein NT01CX_2214, found in Clostridium novyi (strain NT).